We begin with the raw amino-acid sequence, 292 residues long: Hypersensitive-induced response protein 4 (292 aa).

G2 carries the N-myristoyl glycine lipid modification.

As to quaternary structure, self-interacts and forms heteromers. Interacts with NB-LRR class of R proteins before R proteins (e.g. RPS2 or RPM1) are activated by the effectors.

It localises to the cell membrane. This chain is Hypersensitive-induced response protein 4 (HIR4), found in Arabidopsis thaliana (Mouse-ear cress).